The following is a 106-amino-acid chain: Nucleoid-associated protein XC_3243 (106 aa).

Residues 82-106 form a disordered region; it reads DAESKERMGSATAGMQLPPGMKLPF.

It belongs to the YbaB/EbfC family. In terms of assembly, homodimer.

It is found in the cytoplasm. The protein localises to the nucleoid. Binds to DNA and alters its conformation. May be involved in regulation of gene expression, nucleoid organization and DNA protection. The polypeptide is Nucleoid-associated protein XC_3243 (Xanthomonas campestris pv. campestris (strain 8004)).